The sequence spans 373 residues: Chemerin-like receptor 1 (373 aa).

Residues 1 to 41 lie on the Extracellular side of the membrane; it reads MRMEDEDYNTSISYGDEYPDYLDSIVVLEDLSPLEARVTRI. Asn-9 is a glycosylation site (N-linked (GlcNAc...) asparagine). The helical transmembrane segment at 42–64 threads the bilayer; it reads FLVVVYSIVCFLGILGNGLVIII. The Cytoplasmic segment spans residues 65 to 75; the sequence is ATFKMKKTVNM. Residues 76–97 form a helical membrane-spanning segment; it reads VWFLNLAVADFLFNVFLPIHIT. The Extracellular segment spans residues 98–114; that stretch reads YAAMDYHWVFGTAMCKI. Residues Cys-112 and Cys-189 are joined by a disulfide bond. The chain crosses the membrane as a helical span at residues 115 to 135; that stretch reads SNFLLIHNMFTSVFLLTIISS. Residues 136–154 lie on the Cytoplasmic side of the membrane; the sequence is DRCISVLLPVWSQNHRSVR. Residues 155–176 form a helical membrane-spanning segment; it reads LAYMACMVIWVLAFFLSSPSLV. At 177–224 the chain is on the extracellular side; that stretch reads FRDTANLHGKISCFNNFSLSTPGSSSWPTHSQMDPVGYSRHMVVTVTR. Asn-192 carries an N-linked (GlcNAc...) asparagine glycan. Residues 225–245 traverse the membrane as a helical segment; it reads FLCGFLVPVLIITACYLTIVC. Over 246–261 the chain is Cytoplasmic; the sequence is KLQRNRLAKTKKPFKI. Residues 262 to 282 form a helical membrane-spanning segment; the sequence is IVTIIITFFLCWCPYHTLNLL. At 283–300 the chain is on the extracellular side; it reads ELHHTAMPGSVFSLGLPL. A helical membrane pass occupies residues 301–320; the sequence is ATALAIANSCMNPILYVFMG. Over 321–373 the chain is Cytoplasmic; the sequence is QDFKKFKVALFSRLVNALSEDTGHSSYPSHRSFTKMSSMNERTSMNERETGML. Phosphoserine is present on Ser-339. A disordered region spans residues 341–373; that stretch reads DTGHSSYPSHRSFTKMSSMNERTSMNERETGML. Phosphothreonine is present on Thr-342. A compositionally biased stretch (polar residues) spans 344 to 363; sequence HSSYPSHRSFTKMSSMNERT. Ser-349, Ser-352, and Ser-358 each carry phosphoserine. Residues 364–373 show a composition bias toward basic and acidic residues; sequence SMNERETGML.

The protein belongs to the chemokine-like receptor (CMKLR) family. Prominently expressed in developing osseous and cartilaginous tissue. Also found in adult parathyroid glands. Expressed in cardiovascular system, brain, kidney, gastrointestinal tissues and myeloid tissues. Expressed in a broad array of tissues associated with hematopoietic and immune function including, spleen, thymus, appendix, lymph node, bone marrow and fetal liver. Among leukocyte populations abundant expression in monocyte-derived macrophage and immature dendritic cells (DCs). High expression in blood monocytes and low levels in polymorphonuclear cells and T-cells. Expressed on endothelial cells. Highly expressed in differentiating adipocytes.

The protein resides in the cell membrane. Its function is as follows. Receptor for the chemoattractant adipokine chemerin/RARRES2 and for the omega-3 fatty acid derived molecule resolvin E1. Interaction with RARRES2 initiates activation of G proteins G(i)/G(o) and beta-arrestin pathways inducing cellular responses via second messenger pathways such as intracellular calcium mobilization, phosphorylation of MAP kinases MAPK1/MAPK3 (ERK1/2), TYRO3, MAPK14/P38MAPK and PI3K leading to multifunctional effects, like reduction of immune responses, enhancing of adipogenesis and angionesis. Resolvin E1 down-regulates cytokine production in macrophages by reducing the activation of MAPK1/3 (ERK1/2) and NF-kappa-B. Positively regulates adipogenesis and adipocyte metabolism. In terms of biological role, (Microbial infection) Acts as a coreceptor for several SIV strains (SIVMAC316, SIVMAC239, SIVMACL7E-FR and SIVSM62A), as well as a primary HIV-1 strain (92UG024-2). This Homo sapiens (Human) protein is Chemerin-like receptor 1.